The following is a 543-amino-acid chain: Chaperonin GroEL 1 (543 aa).

Residues 29-32 (TLGP), Lys50, 86-90 (DGTTT), Gly414, and Asp493 contribute to the ATP site. Residues 524–543 (KEDKGAPAGMGGMPPGGGMY) form a disordered region. Residues 531-543 (AGMGGMPPGGGMY) show a composition bias toward gly residues.

Belongs to the chaperonin (HSP60) family. As to quaternary structure, forms a cylinder of 14 subunits composed of two heptameric rings stacked back-to-back. Interacts with the co-chaperonin GroES.

It localises to the cytoplasm. The catalysed reaction is ATP + H2O + a folded polypeptide = ADP + phosphate + an unfolded polypeptide.. Together with its co-chaperonin GroES, plays an essential role in assisting protein folding. The GroEL-GroES system forms a nano-cage that allows encapsulation of the non-native substrate proteins and provides a physical environment optimized to promote and accelerate protein folding. The chain is Chaperonin GroEL 1 from Syntrophobacter fumaroxidans (strain DSM 10017 / MPOB).